Here is a 545-residue protein sequence, read N- to C-terminus: Membrane protein insertase YidC (545 aa).

Helical transmembrane passes span 10–30, 319–339, 341–361, 407–427, 467–487, and 502–522; these read AIYL…IFFS, LLYF…NVIP, WGLS…PLTF, LGGC…YGLV, ILPF…SNVS, and MPIM…IYWI.

Belongs to the OXA1/ALB3/YidC family. Type 1 subfamily. In terms of assembly, interacts with the Sec translocase complex via SecD. Specifically interacts with transmembrane segments of nascent integral membrane proteins during membrane integration.

It is found in the cell inner membrane. Functionally, required for the insertion and/or proper folding and/or complex formation of integral membrane proteins into the membrane. Involved in integration of membrane proteins that insert both dependently and independently of the Sec translocase complex, as well as at least some lipoproteins. Aids folding of multispanning membrane proteins. In Borrelia hermsii (strain HS1 / DAH), this protein is Membrane protein insertase YidC.